A 199-amino-acid chain; its full sequence is dCTP deaminase (199 aa).

DCTP is bound by residues 110 to 115, Asp-128, 136 to 138, Tyr-171, and Gln-182; these read RSSLAR and VLE. Glu-138 acts as the Proton donor/acceptor in catalysis.

Belongs to the dCTP deaminase family. As to quaternary structure, homotrimer.

It carries out the reaction dCTP + H2O + H(+) = dUTP + NH4(+). Its pathway is pyrimidine metabolism; dUMP biosynthesis; dUMP from dCTP (dUTP route): step 1/2. Its function is as follows. Catalyzes the deamination of dCTP to dUTP. The chain is dCTP deaminase from Pseudoalteromonas atlantica (strain T6c / ATCC BAA-1087).